A 168-amino-acid polypeptide reads, in one-letter code: Photosystem I assembly protein Ycf3 (168 aa).

TPR repeat units lie at residues 35–68 (AFTY…EIDP), 72–105 (SYIL…NPFL), and 120–153 (GEQA…TPGN).

It belongs to the Ycf3 family.

The protein resides in the plastid. It is found in the chloroplast thylakoid membrane. Essential for the assembly of the photosystem I (PSI) complex. May act as a chaperone-like factor to guide the assembly of the PSI subunits. In Phaseolus vulgaris (Kidney bean), this protein is Photosystem I assembly protein Ycf3.